The chain runs to 470 residues: Nitric oxide synthase, inducible (470 aa).

The L-arginine site is built by Trp-2, Tyr-3, and Glu-7. (6R)-L-erythro-5,6,7,8-tetrahydrobiopterin is bound by residues Arg-11, Trp-93, and Phe-106. Tyr-121 serves as a coordination point for heme b. Residues 145–165 form a calmodulin-binding region; it reads FKAVARAALFSSTLMSRVLAN. The region spanning 169–307 is the Flavodoxin-like domain; the sequence is CTVLYATETG…AFSAWALTAL (139 aa). FMN contacts are provided by Thr-175, Glu-176, Thr-177, Lys-179, Ser-180, Ser-221, Thr-222, Ser-258, Cys-265, Glu-291, and Gln-295. An NADP(+)-binding site is contributed by Arg-380. His-403 contributes to the FAD binding site. Thr-440 contributes to the NADP(+) binding site.

The protein belongs to the NOS family. As to quaternary structure, homodimer. The cofactor is heme b. FAD serves as cofactor. It depends on FMN as a cofactor. (6R)-L-erythro-5,6,7,8-tetrahydrobiopterin is required as a cofactor.

The protein localises to the cytoplasm. The protein resides in the cytosol. The catalysed reaction is 2 L-arginine + 3 NADPH + 4 O2 + H(+) = 2 L-citrulline + 2 nitric oxide + 3 NADP(+) + 4 H2O. Its activity is regulated as follows. Not stimulated by calcium/calmodulin. In terms of biological role, produces nitric oxide (NO) which is a messenger molecule with diverse functions throughout the body. In macrophages, NO mediates tumoricidal and bactericidal actions. Also has nitrosylase activity and mediates cysteine S-nitrosylation of cytoplasmic target proteins such COX2. In Oncorhynchus mykiss (Rainbow trout), this protein is Nitric oxide synthase, inducible (nos2).